A 554-amino-acid chain; its full sequence is Aspartyl/glutamyl-tRNA(Asn/Gln) amidotransferase subunit B (554 aa).

The disordered stretch occupies residues 491-554; sequence AEQPTAPPPE…TPVSHQDAHA (64 aa). Positions 502-540 are enriched in low complexity; sequence ESAAETPEAPPAVEDAPPEAPTEAITAEAGSAEAITAAS.

The protein belongs to the GatB/GatE family. GatB subfamily. In terms of assembly, heterotrimer of A, B and C subunits.

The catalysed reaction is L-glutamyl-tRNA(Gln) + L-glutamine + ATP + H2O = L-glutaminyl-tRNA(Gln) + L-glutamate + ADP + phosphate + H(+). It carries out the reaction L-aspartyl-tRNA(Asn) + L-glutamine + ATP + H2O = L-asparaginyl-tRNA(Asn) + L-glutamate + ADP + phosphate + 2 H(+). Its function is as follows. Allows the formation of correctly charged Asn-tRNA(Asn) or Gln-tRNA(Gln) through the transamidation of misacylated Asp-tRNA(Asn) or Glu-tRNA(Gln) in organisms which lack either or both of asparaginyl-tRNA or glutaminyl-tRNA synthetases. The reaction takes place in the presence of glutamine and ATP through an activated phospho-Asp-tRNA(Asn) or phospho-Glu-tRNA(Gln). This chain is Aspartyl/glutamyl-tRNA(Asn/Gln) amidotransferase subunit B, found in Gloeobacter violaceus (strain ATCC 29082 / PCC 7421).